The sequence spans 364 residues: Anhydro-N-acetylmuramic acid kinase (364 aa).

11–18 (GSSLDGID) provides a ligand contact to ATP.

This sequence belongs to the anhydro-N-acetylmuramic acid kinase family.

The enzyme catalyses 1,6-anhydro-N-acetyl-beta-muramate + ATP + H2O = N-acetyl-D-muramate 6-phosphate + ADP + H(+). It functions in the pathway amino-sugar metabolism; 1,6-anhydro-N-acetylmuramate degradation. It participates in cell wall biogenesis; peptidoglycan recycling. In terms of biological role, catalyzes the specific phosphorylation of 1,6-anhydro-N-acetylmuramic acid (anhMurNAc) with the simultaneous cleavage of the 1,6-anhydro ring, generating MurNAc-6-P. Is required for the utilization of anhMurNAc either imported from the medium or derived from its own cell wall murein, and thus plays a role in cell wall recycling. The chain is Anhydro-N-acetylmuramic acid kinase from Pseudomonas savastanoi pv. phaseolicola (strain 1448A / Race 6) (Pseudomonas syringae pv. phaseolicola (strain 1448A / Race 6)).